Reading from the N-terminus, the 1647-residue chain is Cortactin-binding protein 2 (1647 aa).

Disordered regions lie at residues 1 to 27 (MATD…AEAA), 202 to 222 (EKKK…RSTE), 318 to 427 (HVKK…QPGL), 440 to 468 (GNAN…RDNL), and 482 to 604 (LSRF…PSID). Residues 120–276 (KMQERMATQL…EQLKRGSDSK (157 aa)) are a coiled coil. The span at 362–372 (SSAPSLPPASA) shows a compositional bias: low complexity. The span at 379–388 (GPSTGSTADL) shows a compositional bias: polar residues. The segment covering 389–411 (PSSTAPAPGSAAQSPVAAALGPA) has biased composition (low complexity). Polar residues predominate over residues 440 to 466 (GNANDPDQNGNTTQSPPSRDVSPTSRD). Arg-484 carries the post-translational modification Asymmetric dimethylarginine. The span at 488–509 (PAVGAAPRPGAPPTGDAGAYPP) shows a compositional bias: low complexity. Polar residues predominate over residues 569–579 (TVASPPSSLPQ). ANK repeat units lie at residues 695–725 (GRPT…DINY), 729–758 (DGHS…QVNA), 762–791 (NGFT…NINH), 795–824 (GGQT…DRSV), and 828–857 (DGWT…PAHG). A disordered region spans residues 856–886 (HGNSLNEEEPESDVSDLDDGEESSEGESKPV). The segment covering 861 to 880 (NEEEPESDVSDLDDGEESSE) has biased composition (acidic residues). One copy of the ANK 6 repeat lies at 898–928 (EGWTAAHIAASKGFKNCLEILCRHRGLEPER). Residues 1436-1467 (ENGAWRKVNTSPRRKSGRFSSPTWNKPDLSNE) form a disordered region. The residue at position 1509 (Ser-1509) is a Phosphoserine. The tract at residues 1542–1647 (RTFDSSGNNP…HKNEQTHRKT (106 aa)) is disordered. Composition is skewed to polar residues over residues 1544-1559 (FDSS…TVNN) and 1567-1584 (KEVS…SNNK). Over residues 1609-1623 (SQNTKRSSSSSNTRQ) the composition is skewed to low complexity. Residues 1630-1647 (SKEENWNLHKNEQTHRKT) are compositionally biased toward basic and acidic residues.

Interacts with CTTN/cortactin SH3 domain. Interacts with STRN, STRN4/zinedin and MOB4/phocein; this interactions mediate the association with the STRIPAK core complex and may regulate dendritic spine distribution of the STRIPAK complex in hippocampal neurons. Activation of glutamate receptors weakens the interaction with STRN and STRN4.

Its subcellular location is the cytoplasm. The protein resides in the cell cortex. It localises to the cell projection. The protein localises to the dendritic spine. Regulates the dendritic spine distribution of CTTN/cortactin in hippocampal neurons, and thus controls dendritic spinogenesis and dendritic spine maintenance. Associates with the striatin-interacting phosphatase and kinase (STRIPAK) core complex to regulate dendritic spine distribution of the STRIPAK complex in hippocampal neurons. This is Cortactin-binding protein 2 (CTTNBP2) from Microcebus murinus (Gray mouse lemur).